We begin with the raw amino-acid sequence, 365 residues long: Probable tRNA pseudouridine synthase B (365 aa).

Catalysis depends on Asp-43, which acts as the Nucleophile. One can recognise a PUA domain in the interval 209–285 (YPKIVVKRSA…DHIFLEADDG (77 aa)). The tract at residues 300–365 (SGSGLHKDIQ…GKERHGRDHQ (66 aa)) is disordered. Composition is skewed to basic and acidic residues over residues 304 to 318 (LHKDIQRSEGRKDTR), 326 to 336 (TGPEKTADRVW), and 354 to 365 (GGGKERHGRDHQ).

Belongs to the pseudouridine synthase TruB family. Type 2 subfamily.

The enzyme catalyses uridine(55) in tRNA = pseudouridine(55) in tRNA. Could be responsible for synthesis of pseudouridine from uracil-55 in the psi GC loop of transfer RNAs. In Thermoplasma acidophilum (strain ATCC 25905 / DSM 1728 / JCM 9062 / NBRC 15155 / AMRC-C165), this protein is Probable tRNA pseudouridine synthase B.